A 244-amino-acid polypeptide reads, in one-letter code: Type III pantothenate kinase (244 aa).

ATP is bound at residue 8-15 (DQGNSACK). Position 94–97 (94–97 (GADR)) interacts with substrate. Residue Asp96 is the Proton acceptor of the active site. Asp117 serves as a coordination point for K(+). An ATP-binding site is contributed by Thr120. Thr175 provides a ligand contact to substrate.

Belongs to the type III pantothenate kinase family. Homodimer. The cofactor is NH4(+). K(+) serves as cofactor.

The protein resides in the cytoplasm. It catalyses the reaction (R)-pantothenate + ATP = (R)-4'-phosphopantothenate + ADP + H(+). It participates in cofactor biosynthesis; coenzyme A biosynthesis; CoA from (R)-pantothenate: step 1/5. Catalyzes the phosphorylation of pantothenate (Pan), the first step in CoA biosynthesis. This is Type III pantothenate kinase from Porphyromonas gingivalis (strain ATCC 33277 / DSM 20709 / CIP 103683 / JCM 12257 / NCTC 11834 / 2561).